We begin with the raw amino-acid sequence, 182 residues long: DOMON domain-containing protein Y73F4A.1 (182 aa).

Positions 1–18 (MFVLAIVFAFVFIPSSSS) are cleaved as a signal peptide. The DOMON domain maps to 26–143 (ELVSMNWNVK…CLNWMVVPGG (118 aa)). N-linked (GlcNAc...) asparagine glycans are attached at residues asparagine 47 and asparagine 128.

Its subcellular location is the secreted. This chain is DOMON domain-containing protein Y73F4A.1, found in Caenorhabditis elegans.